Here is a 102-residue protein sequence, read N- to C-terminus: Thioredoxin (102 aa).

Positions 2 to 102 (VTEIKSLKQL…KAKIVQLVSQ (101 aa)) constitute a Thioredoxin domain. Residues cysteine 30 and cysteine 33 are joined by a disulfide bond.

This sequence belongs to the thioredoxin family.

Its function is as follows. Participates in various redox reactions through the reversible oxidation of its active center dithiol to a disulfide and catalyzes dithiol-disulfide exchange reactions. This Mycoplasma pneumoniae (strain ATCC 29342 / M129 / Subtype 1) (Mycoplasmoides pneumoniae) protein is Thioredoxin (trxA).